The following is a 1871-amino-acid chain: Girdin (1871 aa).

In terms of domain architecture, Calponin-homology (CH) spans 12 to 132 (QFMTSPLVTW…KLLLLLLGCA (121 aa)). Residues 196–425 (HLKRLIDERD…EMAQKQSMDE (230 aa)) are a coiled coil. S233, S237, and S449 each carry phosphoserine. A coiled-coil region spans residues 458 to 1385 (TSSRLLKLEM…KIMDQYKFYD (928 aa)). Disordered stretches follow at residues 816 to 842 (ENKSLEQETSQLEKDKKQLEKENKRLR) and 1010 to 1035 (RQDEERMVQSSPPISGEDNKWERESQ). Residue S1020 is modified to Phosphoserine. Basic and acidic residues predominate over residues 1026 to 1035 (EDNKWERESQ). Residue S1387 is modified to Phosphoserine. The interval 1390 to 1408 (RRRGNWITLKMRKLIKSKK) is phosphoinositide-binding. A compositionally biased stretch (basic and acidic residues) spans 1407 to 1416 (KKDINRERQK). 2 disordered regions span residues 1407 to 1459 (KKDI…LGTK) and 1559 to 1601 (TTSF…SNNN). The residue at position 1417 (S1417) is a Phosphoserine; by PKB/AKT1. Composition is skewed to polar residues over residues 1417–1430 (SLTLTPTRSDSSEG), 1445–1459 (VGSNSLEDGQTLGTK), and 1559–1578 (TTSFEDISPQGVSDDSSTGS). Position 1421 is a phosphothreonine (T1421). The GBA motif lies at 1672 to 1702 (KTGSPGSEVVTLQQFLEESNKLTSVQIKSSS). Phosphothreonine is present on T1673. Residue S1675 is modified to Phosphoserine. The residue at position 1690 (S1690) is a Phosphoserine; by PKC/PRKCQ. The segment at 1713–1823 (SLSVSSDFLG…GTTRRTSIHD (111 aa)) is SH2-like; required for interaction with growth factor receptors. A Phosphoserine modification is found at S1717. Positions 1736-1871 (SGKTPGDFYD…KSRSREQQSS (136 aa)) are disordered. Over residues 1743 to 1763 (FYDRRTTKPEFLRPGPRKTED) the composition is skewed to basic and acidic residues. Residues Y1765 and Y1799 each carry the phosphotyrosine modification. Polar residues-rich tracts occupy residues 1787–1799 (SSLSRQSKDSNPY) and 1807–1818 (SVISTAEGTTRR). 2 positions are modified to phosphoserine: S1820 and S1837. Positions 1820-1830 (SIHDFLTKDSR) are enriched in basic and acidic residues. The segment covering 1838–1851 (PPAAADSNTTAASN) has biased composition (low complexity). Positions 1854–1871 (KVQESRNSKSRSREQQSS) are enriched in basic and acidic residues.

It belongs to the CCDC88 family. As to quaternary structure, homodimer. Interacts (via GBA motif) with guanine nucleotide-binding protein G(i) alpha subunits GNAI1, GNAI2 and GNAI3. Also interacts (via GNA motif) with guanine nucleotide-binding protein G(s) alpha subunit GNAS. Interaction with G(i) alpha subunits occurs before interaction with GNAS and is regulated by phosphorylation; phosphorylation at Ser-1675 enhances binding to G(i) alpha subunits while phosphorylation at Ser-1690 abolishes G(i) alpha subunit binding, promoting binding to GNAS. Interacts (via C-terminal SH2-like region) with growth factor receptors EGFR, INSR and KDR/VEGFR2 (via their autophosphorylated cytoplasmic tails). Forms a complex with EGFR and GNAI3 which leads to enhanced EGFR signaling and triggering of cell migration; ligand stimulation is required for recruitment of GNAI3 to the complex. Interacts (tyrosine-phosphorylated form) with phosphatidylinositol 3-kinase (PI3K) regulatory subunit PIK3R1/p85a (via SH2 domains); the interaction enables recruitment of PIK3R1 to the EGFR receptor, enhancing PI3K activity and cell migration. Interacts with serine/threonine-protein kinase PRKCQ; the interaction leads to phosphorylation of CCDC88A and inhibition of its guanine nucleotide exchange factor activity. Interacts (via C-terminus) with DISC1; the interaction is direct. Interacts with AKT proteins; the interaction is inhibited in the presence of DISC1. Interacts with AKT1/PKB (via C-terminus). The non-phosphorylated form interacts with phosphatidylinositol 4-phosphate [PI(4)P] and weakly with phosphatidylinositol 3-phosphate [PI(3)P]. Interacts with microtubules. Interacts with actin. Post-translationally, phosphorylation is induced by epidermal growth factor (EGF) in a phosphoinositide 3-kinase (PI3K)-dependent manner. Phosphorylation by AKT1/PKB is necessary for delocalization from the cell membrane and for cell migration. Phosphorylated on tyrosine residues which promotes binding to phosphatidylinositol 3-kinase (PI3K) regulatory subunit PIK3R1/p85a and enhances PI3K activity. Tyrosine-phosphorylated by both receptor and non-receptor tyrosine kinases in vitro. Tyrosine phosphorylation is required for AKT1-dependent phosphorylation of Ser-1417. Phosphorylation at Ser-1690 by PRKCQ disrupts interaction with GNAI3 and inhibits guanine nucleotide exchange factor activity. Expressed ubiquitously.

The protein localises to the cell membrane. It localises to the cytoplasm. The protein resides in the cytosol. Its subcellular location is the cytoplasmic vesicle. It is found in the cell projection. The protein localises to the lamellipodium. It localises to the cytoskeleton. The protein resides in the cilium basal body. Its subcellular location is the microtubule organizing center. It is found in the centrosome. The protein localises to the centriole. Bifunctional modulator of guanine nucleotide-binding proteins (G proteins). Acts as a non-receptor guanine nucleotide exchange factor which binds to and activates guanine nucleotide-binding protein G(i) alpha subunits. Also acts as a guanine nucleotide dissociation inhibitor for guanine nucleotide-binding protein G(s) subunit alpha GNAS. Essential for cell migration. Interacts in complex with G(i) alpha subunits with the EGFR receptor, retaining EGFR at the cell membrane following ligand stimulation and promoting EGFR signaling which triggers cell migration. Binding to Gi-alpha subunits displaces the beta and gamma subunits from the heterotrimeric G-protein complex which enhances phosphoinositide 3-kinase (PI3K)-dependent phosphorylation and kinase activity of AKT1/PKB. Phosphorylation of AKT1/PKB induces the phosphorylation of downstream effectors GSK3 and FOXO1/FKHR, and regulates DNA replication and cell proliferation. Binds in its tyrosine-phosphorylated form to the phosphatidylinositol 3-kinase (PI3K) regulatory subunit PIK3R1 which enables recruitment of PIK3R1 to the EGFR receptor, enhancing PI3K activity and cell migration. Plays a role as a key modulator of the AKT-mTOR signaling pathway, controlling the tempo of the process of newborn neuron integration during adult neurogenesis, including correct neuron positioning, dendritic development and synapse formation. Inhibition of G(s) subunit alpha GNAS leads to reduced cellular levels of cAMP and suppression of cell proliferation. Essential for the integrity of the actin cytoskeleton. Required for formation of actin stress fibers and lamellipodia. May be involved in membrane sorting in the early endosome. Plays a role in ciliogenesis and cilium morphology and positioning and this may partly be through regulation of the localization of scaffolding protein CROCC/Rootletin. This is Girdin (CCDC88A) from Homo sapiens (Human).